We begin with the raw amino-acid sequence, 380 residues long: Methenyltetrahydrofolate synthase domain-containing protein (380 aa).

A compositionally biased stretch (basic and acidic residues) spans 245 to 258 (EEQAGKDVTLRDGP). Disordered stretches follow at residues 245-283 (EEQAGKDVTLRDGPRSPPGATRSPRDLAPPELGSVPLSS) and 361-380 (LVGSHTAEPLPDHQPAIAGP). In terms of domain architecture, RRM spans 282-355 (SSVQIGNLPR…NTVRVVLARQ (74 aa)).

The sequence is that of Methenyltetrahydrofolate synthase domain-containing protein (MTHFSD) from Bos taurus (Bovine).